The sequence spans 154 residues: Large ribosomal subunit protein uL22c (154 aa).

Belongs to the universal ribosomal protein uL22 family. In terms of assembly, part of the 50S ribosomal subunit.

It localises to the plastid. The protein localises to the chloroplast. This protein binds specifically to 23S rRNA. In terms of biological role, the globular domain of the protein is located near the polypeptide exit tunnel on the outside of the subunit, while an extended beta-hairpin is found that lines the wall of the exit tunnel in the center of the 70S ribosome. The polypeptide is Large ribosomal subunit protein uL22c (rpl22) (Platanus occidentalis (Sycamore)).